Consider the following 950-residue polypeptide: Leucine--tRNA ligase (950 aa).

Residues 72–83 (PYPSGEGLHVGH) carry the 'HIGH' region motif. The 'KMSKS' region signature appears at 722 to 726 (KIGKS). ATP is bound at residue Lys725.

The protein belongs to the class-I aminoacyl-tRNA synthetase family.

It localises to the cytoplasm. The catalysed reaction is tRNA(Leu) + L-leucine + ATP = L-leucyl-tRNA(Leu) + AMP + diphosphate. This Mycobacterium sp. (strain JLS) protein is Leucine--tRNA ligase.